Consider the following 425-residue polypeptide: Probable isoprenylcysteine alpha-carbonyl methylesterase ICMEL1 (425 aa).

Residues 1–10 (MQVELADRAA) are compositionally biased toward basic and acidic residues. Positions 1–42 (MQVELADRAAARPSETGEAPPSSPAAAAAASAAAEDAPLLPG) are disordered. Residues 24–34 (PAAAAAASAAA) are compositionally biased toward low complexity. Transmembrane regions (helical) follow at residues 99–119 (FLAL…VVYY) and 154–174 (VVAF…GALL). Substrate-binding positions include 160–162 (GGA) and 231–233 (QSA). Residues serine 232, aspartate 334, and histidine 366 contribute to the active site.

Belongs to the AB hydrolase superfamily. Isoprenylcysteine methylesterase family.

It is found in the endoplasmic reticulum membrane. Its subcellular location is the golgi apparatus membrane. The catalysed reaction is [protein]-C-terminal S-[(2E,6E)-farnesyl]-L-cysteine methyl ester + H2O = [protein]-C-terminal S-[(2E,6E)-farnesyl]-L-cysteine + methanol + H(+). Functionally, catalyzes the demethylation of isoprenylcysteine methylesters. In Oryza sativa subsp. japonica (Rice), this protein is Probable isoprenylcysteine alpha-carbonyl methylesterase ICMEL1 (IMCEL1).